A 334-amino-acid polypeptide reads, in one-letter code: BTB and MATH domain-containing protein 39 (334 aa).

Residues 14–141 enclose the MATH domain; it reads IVTLVFNIYN…EGRFQIEFDL (128 aa). In terms of domain architecture, BTB spans 164–229; it reads ADGELITDGK…LQLDSFEVSV (66 aa).

The polypeptide is BTB and MATH domain-containing protein 39 (bath-39) (Caenorhabditis elegans).